The sequence spans 74 residues: Metallothionein-like protein type 2 (74 aa).

Belongs to the metallothionein superfamily. Type 15 family.

Its function is as follows. Metallothioneins have a high content of cysteine residues that bind various heavy metals. The sequence is that of Metallothionein-like protein type 2 from Nicotiana plumbaginifolia (Leadwort-leaved tobacco).